Consider the following 366-residue polypeptide: Histidinol-phosphate aminotransferase (366 aa).

N6-(pyridoxal phosphate)lysine is present on K228.

This sequence belongs to the class-II pyridoxal-phosphate-dependent aminotransferase family. Histidinol-phosphate aminotransferase subfamily. In terms of assembly, homodimer. Pyridoxal 5'-phosphate is required as a cofactor.

It catalyses the reaction L-histidinol phosphate + 2-oxoglutarate = 3-(imidazol-4-yl)-2-oxopropyl phosphate + L-glutamate. The protein operates within amino-acid biosynthesis; L-histidine biosynthesis; L-histidine from 5-phospho-alpha-D-ribose 1-diphosphate: step 7/9. This is Histidinol-phosphate aminotransferase from Stutzerimonas stutzeri (Pseudomonas stutzeri).